We begin with the raw amino-acid sequence, 245 residues long: 1-(5-phosphoribosyl)-5-[(5-phosphoribosylamino)methylideneamino] imidazole-4-carboxamide isomerase (245 aa).

The Proton acceptor role is filled by Asp-8. Asp-130 (proton donor) is an active-site residue.

This sequence belongs to the HisA/HisF family.

The protein localises to the cytoplasm. The enzyme catalyses 1-(5-phospho-beta-D-ribosyl)-5-[(5-phospho-beta-D-ribosylamino)methylideneamino]imidazole-4-carboxamide = 5-[(5-phospho-1-deoxy-D-ribulos-1-ylimino)methylamino]-1-(5-phospho-beta-D-ribosyl)imidazole-4-carboxamide. It functions in the pathway amino-acid biosynthesis; L-histidine biosynthesis; L-histidine from 5-phospho-alpha-D-ribose 1-diphosphate: step 4/9. The polypeptide is 1-(5-phosphoribosyl)-5-[(5-phosphoribosylamino)methylideneamino] imidazole-4-carboxamide isomerase (Ectopseudomonas mendocina (strain ymp) (Pseudomonas mendocina)).